The sequence spans 253 residues: MMLLQLSNVSVDTRLAPFSTQVAAGLQTHLIGPNGAGKSTLLASLAGLLPSGGDISLAGKALSLYSGPDLARLRAYLCQQQSALTMMPVFQYLSLYQPAGASLDAIATTIGYLCERLRLTDKLPRMLSQLSGGEWQRVRLAAVFLQVWPDINPDSKLLLLDEPYTGLDVAQKVALDSLLREFCSAGRSAIISAHDLNHTLQQADQVWLMSGGNVLAQGSTDKVMRANILSEVFEVDFQIHNFNRQNWIITKDF.

The region spanning 4–236 (LQLSNVSVDT…NILSEVFEVD (233 aa)) is the ABC transporter domain. 32-39 (GPNGAGKS) is a binding site for ATP.

It belongs to the ABC transporter superfamily. Vitamin B12 importer (TC 3.A.1.13.1) family. In terms of assembly, the complex is composed of two ATP-binding proteins (BtuD), two transmembrane proteins (BtuC) and a solute-binding protein (BtuF).

It localises to the cell inner membrane. It carries out the reaction an R-cob(III)alamin(out) + ATP + H2O = an R-cob(III)alamin(in) + ADP + phosphate + H(+). In terms of biological role, part of the ABC transporter complex BtuCDF involved in vitamin B12 import. Responsible for energy coupling to the transport system. In Yersinia enterocolitica serotype O:8 / biotype 1B (strain NCTC 13174 / 8081), this protein is Vitamin B12 import ATP-binding protein BtuD.